The chain runs to 497 residues: Glycerol kinase (497 aa).

Position 12 (Thr12) interacts with ADP. Residues Thr12, Thr13, and Ser14 each contribute to the ATP site. Thr12 lines the sn-glycerol 3-phosphate pocket. Position 16 (Arg16) interacts with ADP. The sn-glycerol 3-phosphate site is built by Arg82, Glu83, Tyr134, and Asp243. Glycerol-binding residues include Arg82, Glu83, Tyr134, Asp243, and Gln244. The ADP site is built by Thr265 and Gly308. Residues Thr265, Gly308, Gln312, and Gly409 each contribute to the ATP site. 2 residues coordinate ADP: Gly409 and Asn413.

It belongs to the FGGY kinase family.

It catalyses the reaction glycerol + ATP = sn-glycerol 3-phosphate + ADP + H(+). It participates in polyol metabolism; glycerol degradation via glycerol kinase pathway; sn-glycerol 3-phosphate from glycerol: step 1/1. With respect to regulation, inhibited by fructose 1,6-bisphosphate (FBP). In terms of biological role, key enzyme in the regulation of glycerol uptake and metabolism. Catalyzes the phosphorylation of glycerol to yield sn-glycerol 3-phosphate. The chain is Glycerol kinase from Solidesulfovibrio magneticus (strain ATCC 700980 / DSM 13731 / RS-1) (Desulfovibrio magneticus).